The following is a 116-amino-acid chain: Probable prefoldin subunit 2 (116 aa).

It belongs to the prefoldin subunit beta family. As to quaternary structure, heterohexamer of two PFD-alpha type and four PFD-beta type subunits.

Binds specifically to cytosolic chaperonin (c-CPN) and transfers target proteins to it. Binds to nascent polypeptide chain and promotes folding in an environment in which there are many competing pathways for nonnative proteins. This chain is Probable prefoldin subunit 2 (pfdn2), found in Dictyostelium discoideum (Social amoeba).